The primary structure comprises 210 residues: LexA repressor (210 aa).

Residues Ala25 to Asn44 constitute a DNA-binding region (H-T-H motif). Residues Ser120 and Lys159 each act as for autocatalytic cleavage activity in the active site.

The protein belongs to the peptidase S24 family. Homodimer.

The catalysed reaction is Hydrolysis of Ala-|-Gly bond in repressor LexA.. Its function is as follows. Represses a number of genes involved in the response to DNA damage (SOS response), including recA and lexA. In the presence of single-stranded DNA, RecA interacts with LexA causing an autocatalytic cleavage which disrupts the DNA-binding part of LexA, leading to derepression of the SOS regulon and eventually DNA repair. The sequence is that of LexA repressor from Deinococcus radiodurans (strain ATCC 13939 / DSM 20539 / JCM 16871 / CCUG 27074 / LMG 4051 / NBRC 15346 / NCIMB 9279 / VKM B-1422 / R1).